We begin with the raw amino-acid sequence, 155 residues long: 6,7-dimethyl-8-ribityllumazine synthase (155 aa).

5-amino-6-(D-ribitylamino)uracil is bound by residues Phe-23, 57–59, and 83–85; these read AFE and AVI. 88-89 serves as a coordination point for (2S)-2-hydroxy-3-oxobutyl phosphate; it reads AT. His-91 functions as the Proton donor in the catalytic mechanism. Phe-114 lines the 5-amino-6-(D-ribitylamino)uracil pocket. Arg-128 contributes to the (2S)-2-hydroxy-3-oxobutyl phosphate binding site.

This sequence belongs to the DMRL synthase family.

The enzyme catalyses (2S)-2-hydroxy-3-oxobutyl phosphate + 5-amino-6-(D-ribitylamino)uracil = 6,7-dimethyl-8-(1-D-ribityl)lumazine + phosphate + 2 H2O + H(+). It functions in the pathway cofactor biosynthesis; riboflavin biosynthesis; riboflavin from 2-hydroxy-3-oxobutyl phosphate and 5-amino-6-(D-ribitylamino)uracil: step 1/2. Functionally, catalyzes the formation of 6,7-dimethyl-8-ribityllumazine by condensation of 5-amino-6-(D-ribitylamino)uracil with 3,4-dihydroxy-2-butanone 4-phosphate. This is the penultimate step in the biosynthesis of riboflavin. In Leptospira biflexa serovar Patoc (strain Patoc 1 / Ames), this protein is 6,7-dimethyl-8-ribityllumazine synthase.